The sequence spans 271 residues: Uridine-cytidine kinase 1-A (271 aa).

Residue 24 to 32 participates in ATP binding; sequence GGTASGKST. Asp81, Tyr109, His114, Arg163, Arg172, and Gln180 together coordinate substrate. Position 209 (Asp209) interacts with ATP. A disordered region spans residues 241–271; that stretch reads SQKRTFPGQGESGGLILPGKRTHLESSSRPH. Basic and acidic residues predominate over residues 262–271; sequence THLESSSRPH.

The protein belongs to the uridine kinase family.

The enzyme catalyses uridine + ATP = UMP + ADP + H(+). The catalysed reaction is cytidine + ATP = CMP + ADP + H(+). Its pathway is pyrimidine metabolism; CTP biosynthesis via salvage pathway; CTP from cytidine: step 1/3. It participates in pyrimidine metabolism; UMP biosynthesis via salvage pathway; UMP from uridine: step 1/1. Functionally, phosphorylates uridine and cytidine to uridine monophosphate and cytidine monophosphate. Does not phosphorylate deoxyribonucleosides or purine ribonucleosides. Can use ATP or GTP as a phosphate donor. This chain is Uridine-cytidine kinase 1-A (uck1-a), found in Xenopus laevis (African clawed frog).